The primary structure comprises 548 residues: MDSQRNLLVIALLFVSFMIWQAWEQDKNPQPQTQQTTQTTTTAAGSAADQGVPASGQGKMITVKTDVLDLTINTRGGDVEQALLPAYPKELGSNEPFQLLETTPQFIYQAQSGLTGRDGPDNPANGPRPLYNVEKEAFVLADGQNELQVPMTYTDAAGNTFTKTFVFKRGDYAVNVNYSVQNAGEKPLEVSTFGQLKQSVNLPPHRDTGSSNFALHTFRGAAYSTPDEKYEKYKFDTIADNENLNVSSKGGWVAMLQQYFATAWIPRNDGTNNFYTANLGNGIVAIGYKAQPVLVQPGQTGAMTSTLWVGPEIQDKMAAVAPHLDLTVDYGWLWFISQPLFKLLKWIHSFVGNWGFSIIIITFIVRGIMYPLTKAQYTSMAKMRMLQPKIQAMRERLGDDKQRQSQEMMALYKAEKVNPLGGCFPLIIQMPIFLALYYMLMGSIELRHAPFALWIHDLSAQDPYYILPILMGVTMFFIQKMSPTTVTDPMQQKIMTFMPVIFTVFFLWFPSGLVLYYIVSNLVTIIQQQLIYRSLEKRGLHSREKKKS.

The helical transmembrane segment at 6 to 26 (NLLVIALLFVSFMIWQAWEQD) threads the bilayer. The segment at 28 to 56 (NPQPQTQQTTQTTTTAAGSAADQGVPASG) is disordered. Over residues 29–42 (PQPQTQQTTQTTTT) the composition is skewed to low complexity. The next 4 membrane-spanning stretches (helical) occupy residues 350 to 370 (FVGN…GIMY), 424 to 444 (FPLI…MGSI), 458 to 478 (LSAQ…MFFI), and 499 to 519 (PVIF…YYIV).

The protein belongs to the OXA1/ALB3/YidC family. Type 1 subfamily. As to quaternary structure, interacts with the Sec translocase complex via SecD. Specifically interacts with transmembrane segments of nascent integral membrane proteins during membrane integration.

The protein localises to the cell inner membrane. Its function is as follows. Required for the insertion and/or proper folding and/or complex formation of integral membrane proteins into the membrane. Involved in integration of membrane proteins that insert both dependently and independently of the Sec translocase complex, as well as at least some lipoproteins. Aids folding of multispanning membrane proteins. The polypeptide is Membrane protein insertase YidC (Salmonella heidelberg (strain SL476)).